We begin with the raw amino-acid sequence, 236 residues long: Adenylate dimethylallyltransferase (236 aa).

This sequence belongs to the isopentenyl transferase family.

The catalysed reaction is dimethylallyl diphosphate + AMP = N(6)-(dimethylallyl)adenosine 5'-phosphate + diphosphate. Its function is as follows. Transfers dimethylallyl groups to AMP as part of the biosynthesis of cytokinin phytohormones. The polypeptide is Adenylate dimethylallyltransferase (ipt) (Pantoea agglomerans pv. gypsophilae (Erwinia herbicola)).